The chain runs to 312 residues: MLYLYNKHPRIKLRNAAIFDNINRVTVSFYKYIFIHEPIKFRNSLYRMFFKFNIFGRVYIANEGINAQISIPKKIYHKAINIITTSFAVLKDINVNLALDNRESFWVLRMKVRKKILFDNLPIDFFDPNNVGTYLSAKDVNNMLENKNSVLVDMRNHYEYKIGHFDSAINVPVNTFREQLFHIVDFLKHYKNRDIIMYCTGGIRCEKATAWIKYNGFKNVYQIKGGIIKYVRDARIENLLVKFRGKNFVFDERMSEVVSKDVLSKCDQCENLCDTYVNCFNSRCHNLFIQCNFCRKKFHNCCSEHCFKTLLK.

The 91-residue stretch at 145-235 folds into the Rhodanese domain; the sequence is ENKNSVLVDM…GIIKYVRDAR (91 aa). The active-site Cysteine persulfide intermediate is cysteine 199.

This sequence belongs to the TrhO family.

The catalysed reaction is uridine(34) in tRNA + AH2 + O2 = 5-hydroxyuridine(34) in tRNA + A + H2O. Functionally, catalyzes oxygen-dependent 5-hydroxyuridine (ho5U) modification at position 34 in tRNAs. The protein is tRNA uridine(34) hydroxylase of Buchnera aphidicola subsp. Baizongia pistaciae (strain Bp).